We begin with the raw amino-acid sequence, 284 residues long: NAD kinase (284 aa).

The active-site Proton acceptor is the aspartate 71. NAD(+) contacts are provided by residues 71–72 (DG), 144–145 (ND), aspartate 174, 185–190 (TAYNLS), and glutamine 242.

This sequence belongs to the NAD kinase family. It depends on a divalent metal cation as a cofactor.

It is found in the cytoplasm. The enzyme catalyses NAD(+) + ATP = ADP + NADP(+) + H(+). Involved in the regulation of the intracellular balance of NAD and NADP, and is a key enzyme in the biosynthesis of NADP. Catalyzes specifically the phosphorylation on 2'-hydroxyl of the adenosine moiety of NAD to yield NADP. The chain is NAD kinase from Sulfurimonas denitrificans (strain ATCC 33889 / DSM 1251) (Thiomicrospira denitrificans (strain ATCC 33889 / DSM 1251)).